Reading from the N-terminus, the 430-residue chain is Tol-Pal system protein TolB (430 aa).

A signal peptide spans 1-21 (MKQALRVAFGFLILWASVLHA).

The protein belongs to the TolB family. In terms of assembly, the Tol-Pal system is composed of five core proteins: the inner membrane proteins TolA, TolQ and TolR, the periplasmic protein TolB and the outer membrane protein Pal. They form a network linking the inner and outer membranes and the peptidoglycan layer.

It localises to the periplasm. Part of the Tol-Pal system, which plays a role in outer membrane invagination during cell division and is important for maintaining outer membrane integrity. TolB occupies a key intermediary position in the Tol-Pal system because it communicates directly with both membrane-embedded components, Pal in the outer membrane and TolA in the inner membrane. This Shigella boydii serotype 4 (strain Sb227) protein is Tol-Pal system protein TolB.